The following is a 761-amino-acid chain: Membrane protein of ER body-like protein (761 aa).

Disordered regions lie at residues 1–85 (MGSA…GEHT) and 120–162 (GSES…RSRE). Residues 22 to 31 (EVEEDDEQIV) show a composition bias toward acidic residues. The segment covering 48 to 65 (VDSSTITNTSSSSSSSFS) has biased composition (low complexity). Basic and acidic residues predominate over residues 74–85 (PDFHSNGDGEHT). The span at 136-154 (TADLNGEQTQLEPENGSTS) shows a compositional bias: polar residues. The stretch at 186-206 (IEEEVDFEDVEYHDVENMMDK) forms a coiled coil. 2 disordered regions span residues 338–374 (SSSVLEANPPPRESIVPVVNPSRGNLSPMRKDTTGSA) and 416–448 (QTQQKIDNDDSSTADGNHTSDKGRLSPIQPSHG). Over residues 416 to 432 (QTQQKIDNDDSSTADGN) the composition is skewed to polar residues. The next 5 membrane-spanning stretches (helical) occupy residues 549–569 (IVYGGLLEAITSLGVISSAAG), 573–593 (SMLNILVLGLANLLGGLILII), 640–660 (VAILSFIITGILPPVVYYFSF), 670–690 (VASVFGASLFCIVLLAIAKAH), and 702–722 (ILYYGSIAVSVSGISYVVGNF).

The protein belongs to the CCC1 family.

It is found in the endoplasmic reticulum membrane. Functionally, not essential for the accumulation of ER body components, including PYK10. In Arabidopsis thaliana (Mouse-ear cress), this protein is Membrane protein of ER body-like protein (MEBL).